The primary structure comprises 440 residues: Xylose isomerase (440 aa).

Catalysis depends on residues histidine 100 and aspartate 103. Mg(2+)-binding residues include glutamate 231, glutamate 267, histidine 270, aspartate 295, aspartate 306, aspartate 308, and aspartate 338.

It belongs to the xylose isomerase family. Homotetramer. Mg(2+) is required as a cofactor.

It localises to the cytoplasm. The enzyme catalyses alpha-D-xylose = alpha-D-xylulofuranose. The polypeptide is Xylose isomerase (Paraburkholderia phytofirmans (strain DSM 17436 / LMG 22146 / PsJN) (Burkholderia phytofirmans)).